The following is a 407-amino-acid chain: Argininosuccinate synthase (407 aa).

Residues 16–24 (AYSGGLDTS) and Ala44 contribute to the ATP site. L-citrulline contacts are provided by Tyr96 and Ser101. Gly126 is a binding site for ATP. L-aspartate is bound by residues Thr128, Asn132, and Asp133. Residue Asn132 participates in L-citrulline binding. Residues Arg136, Ser185, Ser194, Glu270, and Tyr282 each contribute to the L-citrulline site.

This sequence belongs to the argininosuccinate synthase family. Type 1 subfamily. As to quaternary structure, homotetramer.

It is found in the cytoplasm. It catalyses the reaction L-citrulline + L-aspartate + ATP = 2-(N(omega)-L-arginino)succinate + AMP + diphosphate + H(+). It participates in amino-acid biosynthesis; L-arginine biosynthesis; L-arginine from L-ornithine and carbamoyl phosphate: step 2/3. The sequence is that of Argininosuccinate synthase from Shewanella sediminis (strain HAW-EB3).